The following is a 23-amino-acid chain: Dermaseptin-4 (23 aa).

Residue Gln23 is modified to Glutamine amide.

In terms of tissue distribution, expressed by the skin glands.

The protein localises to the secreted. In terms of biological role, antimicrobial peptide, active against the Gram-positive bacterium S.aureus, and the Gram-negative bacteria E.coli and P.aeruginosa. Has hemolytic activity (5% hemolysis at 128 ug/ml). This chain is Dermaseptin-4, found in Phyllomedusa tarsius (Brownbelly leaf frog).